Consider the following 142-residue polypeptide: Pro-Viral epidermal growth factor (142 aa).

The signal sequence occupies residues 1–19 (MSIKYLMLLFAAMIIRSLA). At 20 to 104 (DSGNAIETTS…DTTTSYIPSL (85 aa)) the chain is on the extracellular side. N-linked (GlcNAc...) asparagine; by host glycosylation occurs at N34. The cysteines at positions 71 and 80 are disulfide-linked. The chain crosses the membrane as a helical span at residues 105 to 125 (GIVLVLVGIIITCCLLSVYMF). Over 126 to 142 (TRRTKLPIQDMVVLYFL) the chain is Cytoplasmic.

This sequence belongs to the orthopoxvirus OPG019 family. Interacts with host EGFR. Cleaved at the cell surface by host ADAM10, thereby releasing the secreted form of VGF.

The protein localises to the host membrane. The protein resides in the secreted. Functionally, stimulates cellular proliferation (hyperplasia)and mobility around infected cells to promote rapid and efficient spread of infection. This effect is beneficial for virus replication in vivo, because poxviruses replicate possibly better in proliferating cells than in quiescent cells. Acts by binding host EGFR, inducing its dimerization, autophosphorylation and leading to activation of several cellular pathways regulating cell proliferation or cell survival. The activation by host EGFR of mitogen activated protein kinases (MAPK) and extracellular-signal regulated kinases (ERK) are essential for the positive effect of vaccinia growth factor on poxvirus virulence in vivo. The polypeptide is Pro-Viral epidermal growth factor (OPG019) (Cynomys gunnisoni (Gunnison's prairie dog)).